Reading from the N-terminus, the 838-residue chain is Probable beta-glucosidase I (838 aa).

Residues Asn57 and Asn197 are each glycosylated (N-linked (GlcNAc...) asparagine). Asp225 is an active-site residue. The 161-residue stretch at 395 to 555 (EGEKGFKFRV…GQEELISKAA (161 aa)) folds into the PA14 domain. N-linked (GlcNAc...) asparagine glycosylation is present at Asn493.

Belongs to the glycosyl hydrolase 3 family.

It localises to the secreted. It catalyses the reaction Hydrolysis of terminal, non-reducing beta-D-glucosyl residues with release of beta-D-glucose.. Its pathway is glycan metabolism; cellulose degradation. Functionally, beta-glucosidases are one of a number of cellulolytic enzymes involved in the degradation of cellulosic biomass. Catalyzes the last step releasing glucose from the inhibitory cellobiose. This Aspergillus clavatus (strain ATCC 1007 / CBS 513.65 / DSM 816 / NCTC 3887 / NRRL 1 / QM 1276 / 107) protein is Probable beta-glucosidase I (bglI).